A 149-amino-acid polypeptide reads, in one-letter code: Ribonuclease H (149 aa).

Residues 1–143 (MNQVVIYTDG…ADALANKGVD (143 aa)) enclose the RNase H type-1 domain. 4 residues coordinate Mg(2+): Asp9, Glu47, Asp69, and Asp135.

It belongs to the RNase H family. In terms of assembly, monomer. Mg(2+) serves as cofactor.

Its subcellular location is the cytoplasm. The catalysed reaction is Endonucleolytic cleavage to 5'-phosphomonoester.. Functionally, endonuclease that specifically degrades the RNA of RNA-DNA hybrids. The chain is Ribonuclease H from Paracidovorax citrulli (strain AAC00-1) (Acidovorax citrulli).